The primary structure comprises 302 residues: Ribosomal RNA small subunit methyltransferase H (302 aa).

Residues 36–38, D56, F84, D99, and Q106 contribute to the S-adenosyl-L-methionine site; that span reads GGH.

The protein belongs to the methyltransferase superfamily. RsmH family.

The protein localises to the cytoplasm. It catalyses the reaction cytidine(1402) in 16S rRNA + S-adenosyl-L-methionine = N(4)-methylcytidine(1402) in 16S rRNA + S-adenosyl-L-homocysteine + H(+). In terms of biological role, specifically methylates the N4 position of cytidine in position 1402 (C1402) of 16S rRNA. The chain is Ribosomal RNA small subunit methyltransferase H from Flavobacterium johnsoniae (strain ATCC 17061 / DSM 2064 / JCM 8514 / BCRC 14874 / CCUG 350202 / NBRC 14942 / NCIMB 11054 / UW101) (Cytophaga johnsonae).